Reading from the N-terminus, the 1316-residue chain is Serine/threonine-protein kinase 36 (1316 aa).

The region spanning 4 to 254 is the Protein kinase domain; that stretch reads YHVLEMIGEG…WPDLLHHPFI (251 aa). ATP is bound by residues 10–18 and lysine 33; that span reads IGEGSFGRV. Catalysis depends on aspartate 125, which acts as the Proton acceptor. A disordered region spans residues 389-418; the sequence is QGFPEPRPEAMGRQSTDVVDPENEEPDSDD. The span at 407–418 shows a compositional bias: acidic residues; sequence VDPENEEPDSDD.

Belongs to the protein kinase superfamily. Ser/Thr protein kinase family. Interacts with SPAG16 and KIF27. Mg(2+) serves as cofactor. Weakly expressed in the heart and thymus, present at moderate to high levels in the lungs, pancreas, and kidneys and at higher levels in the brain and cerebellum. Very highly expressed in the testis.

The protein localises to the cytoplasm. Its subcellular location is the nucleus. It is found in the cytoskeleton. The protein resides in the cilium axoneme. The enzyme catalyses L-seryl-[protein] + ATP = O-phospho-L-seryl-[protein] + ADP + H(+). It catalyses the reaction L-threonyl-[protein] + ATP = O-phospho-L-threonyl-[protein] + ADP + H(+). Serine/threonine protein kinase which plays an important role in the sonic hedgehog (Shh) pathway by regulating the activity of GLI transcription factors. Controls the activity of the transcriptional regulators GLI1, GLI2 and GLI3 by opposing the effect of SUFU and promoting their nuclear localization. GLI2 requires an additional function of STK36 to become transcriptionally active, but the enzyme does not need to possess an active kinase catalytic site for this to occur. Required for postnatal development, possibly by regulating the homeostasis of cerebral spinal fluid or ciliary function. Essential for construction of the central pair apparatus of motile cilia. The polypeptide is Serine/threonine-protein kinase 36 (Mus musculus (Mouse)).